Consider the following 85-residue polypeptide: Large ribosomal subunit protein bL27 (85 aa).

This sequence belongs to the bacterial ribosomal protein bL27 family.

In Leptospira biflexa serovar Patoc (strain Patoc 1 / Ames), this protein is Large ribosomal subunit protein bL27.